Reading from the N-terminus, the 697-residue chain is SPX domain-containing membrane protein OsI_08463 (697 aa).

Residues 2-145 (VNFGKRLMAD…GYKFTDYYVS (144 aa)) form the SPX domain. The next 11 membrane-spanning stretches (helical) occupy residues 247–267 (FMSLLLNLANTFLYMVNTYII), 278–298 (LGAAATVCGVIIGSMAVAQVF), 315–335 (LVFSSIMLFLGNLLYALAYDV), 338–356 (LTVLIVGRLLCGLGSARAV), 375–395 (AGFVSASALGMACGPALAGLL), 411–431 (LPGWIMCLAWITYLFWLWISF), 513–533 (LLIYFMLKFAMEILLSESSVV), 544–564 (TVAMFLAVLGLTVLPVNVIVG), 576–596 (ILVASEIMVLIGIAMSFRFTS), 604–624 (VSSALITFVFAEVLEGVNLSL), and 670–690 (LLNVTLLPSFVICVASIVATF).

It belongs to the major facilitator superfamily.

Its subcellular location is the membrane. This chain is SPX domain-containing membrane protein OsI_08463, found in Oryza sativa subsp. indica (Rice).